Consider the following 65-residue polypeptide: uncharacterized protein (65 aa).

The next 2 helical transmembrane spans lie at 4–24 and 39–59; these read AWLFWSVIVLYFFIKFFDKVL and LPIPMKILLTIALVLFLFIVF.

Its subcellular location is the membrane. This is an uncharacterized protein from Streptococcus pneumoniae serotype 2 (strain D39 / NCTC 7466).